The following is a 117-amino-acid chain: Swarming motility protein SwrAA (117 aa).

Its subcellular location is the cytoplasm. Functionally, required for swarm cell differentiation. Plays a crucial role in regulating the degree of cell flagellation. The protein is Swarming motility protein SwrAA (swrAA) of Bacillus subtilis (strain 168).